The following is a 205-amino-acid chain: MIRYPNGKSYQPIQPIGTKKRISGESSYSNRGMTLEADLNETNQYYLVNGIAVIHKKPTPVQIVNVDYPKRSAAVIKEAYFKQSSTTDYNGVYRGRYIDFEAKETKSTTSFPLKNFHEHQIEHMKQVEKQGGICFVIISAFGSVYYLPASDLFFFWERQKLNGRKSISKDELMEAGHLMTLGYSPRIDYIKVVETLHFSDESEYQ.

The segment at 1–26 (MIRYPNGKSYQPIQPIGTKKRISGES) is disordered. Mg(2+) contacts are provided by Thr-86, Asp-88, Glu-101, and Gln-120.

This sequence belongs to the RecU family. It depends on Mg(2+) as a cofactor.

The protein resides in the cytoplasm. It catalyses the reaction Endonucleolytic cleavage at a junction such as a reciprocal single-stranded crossover between two homologous DNA duplexes (Holliday junction).. Functionally, endonuclease that resolves Holliday junction intermediates in genetic recombination. Cleaves mobile four-strand junctions by introducing symmetrical nicks in paired strands. Promotes annealing of linear ssDNA with homologous dsDNA. Required for DNA repair, homologous recombination and chromosome segregation. The polypeptide is Holliday junction resolvase RecU (Bacillus pumilus (strain SAFR-032)).